A 285-amino-acid polypeptide reads, in one-letter code: Ribose-phosphate pyrophosphokinase (285 aa).

Residues 33–35 (DGE) and 91–92 (RQ) each bind ATP. 2 residues coordinate Mg(2+): His125 and Asp162. The active site involves Lys185. D-ribose 5-phosphate is bound by residues Arg187, Asp211, and 215–219 (STGGT).

This sequence belongs to the ribose-phosphate pyrophosphokinase family. Class III (archaeal) subfamily. Requires Mg(2+) as cofactor.

The protein resides in the cytoplasm. The enzyme catalyses D-ribose 5-phosphate + ATP = 5-phospho-alpha-D-ribose 1-diphosphate + AMP + H(+). It functions in the pathway metabolic intermediate biosynthesis; 5-phospho-alpha-D-ribose 1-diphosphate biosynthesis; 5-phospho-alpha-D-ribose 1-diphosphate from D-ribose 5-phosphate (route I): step 1/1. Involved in the biosynthesis of the central metabolite phospho-alpha-D-ribosyl-1-pyrophosphate (PRPP) via the transfer of pyrophosphoryl group from ATP to 1-hydroxyl of ribose-5-phosphate (Rib-5-P). This Methanothermobacter thermautotrophicus (strain ATCC 29096 / DSM 1053 / JCM 10044 / NBRC 100330 / Delta H) (Methanobacterium thermoautotrophicum) protein is Ribose-phosphate pyrophosphokinase.